Reading from the N-terminus, the 420-residue chain is Diaminopimelate decarboxylase (420 aa).

N6-(pyridoxal phosphate)lysine is present on lysine 54. Histidine 191 lines the substrate pocket. Residues glycine 227 and glutamate 268 to arginine 271 each bind pyridoxal 5'-phosphate. 3 residues coordinate substrate: arginine 271, arginine 307, and tyrosine 311. Residue cysteine 342 is the Proton donor of the active site. Residues glutamate 343 and tyrosine 378 each contribute to the substrate site. A pyridoxal 5'-phosphate-binding site is contributed by tyrosine 378.

This sequence belongs to the Orn/Lys/Arg decarboxylase class-II family. LysA subfamily. Pyridoxal 5'-phosphate is required as a cofactor.

It carries out the reaction meso-2,6-diaminopimelate + H(+) = L-lysine + CO2. It participates in amino-acid biosynthesis; L-lysine biosynthesis via DAP pathway; L-lysine from DL-2,6-diaminopimelate: step 1/1. Its activity is regulated as follows. Is activated by 2,3-dimercaptopropan-1-ol. Functionally, specifically catalyzes the decarboxylation of meso-diaminopimelate (meso-DAP) to L-lysine. Is not active against the DD- or LL-isomers of diaminopimelate. This is Diaminopimelate decarboxylase from Escherichia coli (strain K12).